The sequence spans 333 residues: Ketol-acid reductoisomerase (NADP(+)) (333 aa).

Positions 2–182 constitute a KARI N-terminal Rossmann domain; it reads ANIYYDDSCD…GGGRAGILET (181 aa). NADP(+)-binding positions include 25–28, Arg48, Ser51, Ser53, and 83–86; these read YGSQ and DTIQ. The active site involves His108. Residue Gly134 coordinates NADP(+). A KARI C-terminal knotted domain is found at 183–331; the sequence is SFREETETDL…TKLRSMMKWL (149 aa). Asp191, Glu195, Glu227, and Glu231 together coordinate Mg(2+). Ser252 is a binding site for substrate.

This sequence belongs to the ketol-acid reductoisomerase family. Mg(2+) serves as cofactor.

The enzyme catalyses (2R)-2,3-dihydroxy-3-methylbutanoate + NADP(+) = (2S)-2-acetolactate + NADPH + H(+). It carries out the reaction (2R,3R)-2,3-dihydroxy-3-methylpentanoate + NADP(+) = (S)-2-ethyl-2-hydroxy-3-oxobutanoate + NADPH + H(+). The protein operates within amino-acid biosynthesis; L-isoleucine biosynthesis; L-isoleucine from 2-oxobutanoate: step 2/4. It participates in amino-acid biosynthesis; L-valine biosynthesis; L-valine from pyruvate: step 2/4. Its function is as follows. Involved in the biosynthesis of branched-chain amino acids (BCAA). Catalyzes an alkyl-migration followed by a ketol-acid reduction of (S)-2-acetolactate (S2AL) to yield (R)-2,3-dihydroxy-isovalerate. In the isomerase reaction, S2AL is rearranged via a Mg-dependent methyl migration to produce 3-hydroxy-3-methyl-2-ketobutyrate (HMKB). In the reductase reaction, this 2-ketoacid undergoes a metal-dependent reduction by NADPH to yield (R)-2,3-dihydroxy-isovalerate. The sequence is that of Ketol-acid reductoisomerase (NADP(+)) from Leptospira biflexa serovar Patoc (strain Patoc 1 / Ames).